We begin with the raw amino-acid sequence, 148 residues long: Augurin (148 aa).

The first 31 residues, 1 to 31 (MGTSSARPAVLALAGLALLLLLCLGPGDVSG), serve as a signal peptide directing secretion. Propeptides lie at residues 32 to 68 (NKLK…LKRA) and 133 to 148 (SREG…YDDY).

The protein belongs to the augurin family. In terms of tissue distribution, expressed in the brain, with expression in the choroid plexus and the ventricular ependymal cells (at protein level).

It localises to the secreted. Its subcellular location is the cytoplasm. The protein localises to the apical cell membrane. Probable hormone that may attenuate cell proliferation and induce senescence of oligodendrocyte and neural precursor cells in the central nervous system. ECRG4-induced senescence is characterized by G1 arrest, RB1 dephosphorylation and accelerated CCND1 and CCND3 proteasomal degradation. The chain is Augurin from Rattus norvegicus (Rat).